The following is a 514-amino-acid chain: Steroid 17-alpha-hydroxylase/17,20 lyase (514 aa).

Residue cysteine 445 coordinates heme.

It belongs to the cytochrome P450 family. The cofactor is heme.

Its subcellular location is the membrane. The catalysed reaction is a C21-steroid + reduced [NADPH--hemoprotein reductase] + O2 = a 17alpha-hydroxy-C21-steroid + oxidized [NADPH--hemoprotein reductase] + H2O + H(+). The enzyme catalyses 17alpha-hydroxyprogesterone + reduced [NADPH--hemoprotein reductase] + O2 = androst-4-ene-3,17-dione + acetate + oxidized [NADPH--hemoprotein reductase] + H2O + 2 H(+). It catalyses the reaction 17alpha-hydroxypregnenolone + reduced [NADPH--hemoprotein reductase] + O2 = 3beta-hydroxyandrost-5-en-17-one + acetate + oxidized [NADPH--hemoprotein reductase] + H2O + 2 H(+). It functions in the pathway lipid metabolism; steroid biosynthesis. Functionally, conversion of pregnenolone and progesterone to their 17-alpha-hydroxylated products and subsequently to dehydroepiandrosterone (DHEA) and androstenedione. Catalyzes both the 17-alpha-hydroxylation and the 17,20-lyase reaction. The sequence is that of Steroid 17-alpha-hydroxylase/17,20 lyase (cyp17a1) from Ictalurus punctatus (Channel catfish).